The following is a 197-amino-acid chain: MAVSPKINRREHILQCLAQMLETSPGQRITTAKLASEVGVSEAALYRHFPSKARMFEGLIEFIEESLLSRINIIMDDEKDTMRRCQLVLQLLLIFAERNPGISRVLNGDALLGENERLRSRISTLFAKIETQLKQILREKTLREGKGFNLDEAILANLLLAFAEGRIAQFVRSEFKLKPTQHFDEQWRFIQHQLLQS.

The region spanning 7–67 (INRREHILQC…GLIEFIEESL (61 aa)) is the HTH tetR-type domain. Residues 30 to 49 (TTAKLASEVGVSEAALYRHF) constitute a DNA-binding region (H-T-H motif).

It belongs to the nucleoid occlusion factor SlmA family. As to quaternary structure, homodimer. Interacts with FtsZ.

It is found in the cytoplasm. It localises to the nucleoid. Its function is as follows. Required for nucleoid occlusion (NO) phenomenon, which prevents Z-ring formation and cell division over the nucleoid. Acts as a DNA-associated cell division inhibitor that binds simultaneously chromosomal DNA and FtsZ, and disrupts the assembly of FtsZ polymers. SlmA-DNA-binding sequences (SBS) are dispersed on non-Ter regions of the chromosome, preventing FtsZ polymerization at these regions. This Shewanella sp. (strain MR-7) protein is Nucleoid occlusion factor SlmA.